We begin with the raw amino-acid sequence, 1709 residues long: Hybrid signal transduction histidine kinase L (1709 aa).

Disordered regions lie at residues Ser52 to His192, Phe206 to Asp276, Thr413 to Cys535, and Gln554 to Asn615. Residues Asn53 to Asn87 are compositionally biased toward low complexity. Positions Asn88–Leu100 are enriched in basic and acidic residues. Residues Thr106 to Asn148 are compositionally biased toward low complexity. Positions Ser149–Asn170 are enriched in polar residues. Low complexity-rich tracts occupy residues Thr413 to Ser466, Asn486 to Cys535, and Gln554 to Ser576. The span at Leu585–Gln610 shows a compositional bias: polar residues. A PAS domain is found at Ala700–Asn771. In terms of domain architecture, PAC spans Trp770–Leu822. A Histidine kinase domain is found at Met837 to Lys1059. At His840 the chain carries Phosphohistidine; by autocatalysis. 2 disordered regions span residues Leu1068–His1112 and Gln1137–Pro1298. Composition is skewed to low complexity over residues Leu1075–His1112, Gln1137–Gln1153, and Asn1176–Gln1194. The span at His1204–Gln1221 shows a compositional bias: basic residues. Composition is skewed to polar residues over residues Asn1244–Ser1257 and Asn1275–Pro1298. 2 consecutive Response regulatory domains span residues Lys1312–Leu1492 and Lys1570–Gly1692. Asp1366 bears the 4-aspartylphosphate mark. Low complexity-rich tracts occupy residues Gln1390–Gln1412 and Lys1420–Gly1440. A disordered region spans residues Gln1390 to Gly1440. Residue Asp1622 is modified to 4-aspartylphosphate.

Post-translationally, activation probably requires transfer of a phosphate group between a histidine in the kinase core (transmitter) domain and an aspartate of the receiver domain.

It catalyses the reaction ATP + protein L-histidine = ADP + protein N-phospho-L-histidine.. In terms of biological role, acts as a receptor histidine kinase for a signal transduction pathway. This protein undergoes an ATP-dependent autophosphorylation at a conserved histidine residue in the kinase core, and a phosphoryl group is then transferred to a conserved aspartate residue in the receiver domain. This Dictyostelium discoideum (Social amoeba) protein is Hybrid signal transduction histidine kinase L (dhkL).